We begin with the raw amino-acid sequence, 139 residues long: Putative pre-16S rRNA nuclease (139 aa).

The protein belongs to the YqgF nuclease family.

The protein localises to the cytoplasm. Functionally, could be a nuclease involved in processing of the 5'-end of pre-16S rRNA. In Streptococcus thermophilus (strain CNRZ 1066), this protein is Putative pre-16S rRNA nuclease.